The sequence spans 508 residues: General transcription factor IIF subunit 1 (508 aa).

N-acetylalanine is present on Ala2. Thr156 bears the Phosphothreonine mark. The segment at 177–448 is disordered; it reads MQQRRLKDQD…SSGDVQVTED (272 aa). Ser217, Ser218, Ser221, and Ser224 each carry phosphoserine. Residues 232–251 show a composition bias toward basic residues; sequence SKAKKKAPVTKAGRKKKKKK. Composition is skewed to acidic residues over residues 255 to 270 and 303 to 325; these read DEAFEDSDDGDFEGQE and EQSESSEESEEEKPPEEDKEEEE. The residue at position 331 (Thr331) is a Phosphothreonine. The span at 343–355 shows a compositional bias: acidic residues; sequence DDSDSSEESDIDS. A compositionally biased stretch (basic residues) spans 364 to 374; sequence AKKKTPPKRER. A phosphoserine mark is found at Ser377, Ser380, Ser381, and Ser385. The span at 378–388 shows a compositional bias: polar residues; that stretch reads GGSSKGTSRPG. Thr389 is modified (phosphothreonine). Residues 389-406 show a composition bias toward low complexity; that stretch reads TPSAEAASTSSTLRAAAS. Residue Ser391 is modified to Phosphoserine. The residue at position 407 (Lys407) is an N6-acetyllysine. The segment covering 428–443 has biased composition (polar residues); that stretch reads GPQSLSGKSTPSSGDV. Phosphoserine is present on residues Ser431, Ser433, and Ser436. Thr437 is subject to Phosphothreonine. Phosphoserine is present on Ser440.

Belongs to the TFIIF alpha subunit family. In terms of assembly, heterodimer of an alpha and a beta subunit. Interacts with GTF2F2, CTDP1, TAF6/TAFII80 and URI1. Interacts with GTF2B (via C-terminus and preferentially via acetylated form); this interaction prevents binding of GTF2B to GTF2F2. Part of TBP-based Pol II pre-initiation complex (PIC), in which Pol II core assembles with general transcription factors and other specific initiation factors including GTF2E1, GTF2E2, GTF2F1, GTF2F2, TCEA1, ERCC2, ERCC3, GTF2H2, GTF2H3, GTF2H4, GTF2H5, GTF2A1, GTF2A2, GTF2B and TBP; this large multi-subunit PIC complex mediates DNA unwinding and targets Pol II core to the transcription start site where the first phosphodiester bond forms. Phosphorylated on Ser and other residues by TAF1 and casein kinase II-like kinases.

The protein resides in the nucleus. TFIIF is a general transcription initiation factor that binds to RNA polymerase II and helps to recruit it to the initiation complex in collaboration with TFIIB. It promotes transcription elongation. The polypeptide is General transcription factor IIF subunit 1 (Gtf2f1) (Rattus norvegicus (Rat)).